We begin with the raw amino-acid sequence, 114 residues long: Large ribosomal subunit protein bL19 (114 aa).

Belongs to the bacterial ribosomal protein bL19 family.

Functionally, this protein is located at the 30S-50S ribosomal subunit interface and may play a role in the structure and function of the aminoacyl-tRNA binding site. In Heliobacterium modesticaldum (strain ATCC 51547 / Ice1), this protein is Large ribosomal subunit protein bL19.